The chain runs to 109 residues: Cytochrome bo(3) ubiquinol oxidase subunit 4 (109 aa).

Residues methionine 1–threonine 17 lie on the Cytoplasmic side of the membrane. Residues tyrosine 18 to valine 36 form a helical membrane-spanning segment. The Periplasmic portion of the chain corresponds to methionine 37–valine 45. The chain crosses the membrane as a helical span at residues isoleucine 46–cysteine 64. Residues phenylalanine 65–alanine 80 lie on the Cytoplasmic side of the membrane. Residues phenylalanine 81–methionine 99 form a helical membrane-spanning segment. The Periplasmic portion of the chain corresponds to tryptophan 100 to histidine 109.

Belongs to the cytochrome c oxidase bacterial subunit 4 family. Heterooctamer of two A chains, two B chains, two C chains and two D chains.

The protein localises to the cell inner membrane. Functionally, cytochrome bo(3) ubiquinol terminal oxidase is the component of the aerobic respiratory chain of E.coli that predominates when cells are grown at high aeration. Has proton pump activity across the membrane in addition to electron transfer, pumping 2 protons/electron. The protein is Cytochrome bo(3) ubiquinol oxidase subunit 4 (cyoD) of Escherichia coli O157:H7.